A 250-amino-acid chain; its full sequence is Aliphatic sulfonates import ATP-binding protein SsuB 2 (250 aa).

Residues 13–229 (VRLQGLTRSF…SYRDPLLGEY (217 aa)) enclose the ABC transporter domain. 45 to 52 (GHSGSGKS) is a binding site for ATP.

Belongs to the ABC transporter superfamily. Aliphatic sulfonates importer (TC 3.A.1.17.2) family. In terms of assembly, the complex is composed of two ATP-binding proteins (SsuB), two transmembrane proteins (SsuC) and a solute-binding protein (SsuA).

The protein localises to the cell membrane. It catalyses the reaction ATP + H2O + aliphatic sulfonate-[sulfonate-binding protein]Side 1 = ADP + phosphate + aliphatic sulfonateSide 2 + [sulfonate-binding protein]Side 1.. In terms of biological role, part of the ABC transporter complex SsuABC involved in aliphatic sulfonates import. Responsible for energy coupling to the transport system. The sequence is that of Aliphatic sulfonates import ATP-binding protein SsuB 2 from Streptomyces avermitilis (strain ATCC 31267 / DSM 46492 / JCM 5070 / NBRC 14893 / NCIMB 12804 / NRRL 8165 / MA-4680).